Here is a 673-residue protein sequence, read N- to C-terminus: DNA ligase (673 aa).

NAD(+) is bound by residues 34–38 (DAEYD), 83–84 (SL), and Glu-116. Catalysis depends on Lys-118, which acts as the N6-AMP-lysine intermediate. Residues Arg-139, Glu-176, Lys-293, and Lys-317 each contribute to the NAD(+) site. Positions 411, 414, 429, and 435 each coordinate Zn(2+). The region spanning 595-673 (NQQNPFFGKT…EDEFLKWVNS (79 aa)) is the BRCT domain.

Belongs to the NAD-dependent DNA ligase family. LigA subfamily. It depends on Mg(2+) as a cofactor. Requires Mn(2+) as cofactor.

It carries out the reaction NAD(+) + (deoxyribonucleotide)n-3'-hydroxyl + 5'-phospho-(deoxyribonucleotide)m = (deoxyribonucleotide)n+m + AMP + beta-nicotinamide D-nucleotide.. Its function is as follows. DNA ligase that catalyzes the formation of phosphodiester linkages between 5'-phosphoryl and 3'-hydroxyl groups in double-stranded DNA using NAD as a coenzyme and as the energy source for the reaction. It is essential for DNA replication and repair of damaged DNA. The protein is DNA ligase of Legionella pneumophila subsp. pneumophila (strain Philadelphia 1 / ATCC 33152 / DSM 7513).